The sequence spans 401 residues: Chalcone synthase 4 (401 aa).

Residue Cys-168 is part of the active site.

Belongs to the thiolase-like superfamily. Chalcone/stilbene synthases family.

The enzyme catalyses (E)-4-coumaroyl-CoA + 3 malonyl-CoA + 3 H(+) = 2',4,4',6'-tetrahydroxychalcone + 3 CO2 + 4 CoA. The protein operates within secondary metabolite biosynthesis; flavonoid biosynthesis. In terms of biological role, the primary product of this enzyme is 4,2',4',6'-tetrahydroxychalcone (also termed naringenin-chalcone or chalcone) which can under specific conditions spontaneously isomerize into naringenin. The protein is Chalcone synthase 4 (CHS4) of Sorghum bicolor (Sorghum).